The chain runs to 449 residues: MNPNQKIITIGSICMVIGIVSLMLQIGNIISIWVSHSIQTGNQHQAEPISNTNFLTEKAVASVTLAGNSSLCPISGWAVHSKDNSIRIGSKGDVFVIREPFISCSHLECRTFFLTQGALLNDKHSNGTVKDRSPHRTLMSCPVGEAPSPYNSRFESVAWSASACHDGTSWLTIGISGPDNGAVAVLKYNGIITDTIKSWRNNILRTQESECACVNGSCFTVMTDGPSNGQASYKIFKMEKGKVVKSVELDAPNYHYEECSCYPDAGEITCVCRDNWHGSNRPWVSFNQNLEYQIGYICSGVFGDNPRPNDGTGSCGPMSPNGAYGVKGFSFKYGNGVWIGRTKSTNSRSGFEMIWDPNGWTGTDSSFSVKQDIVAITDWSGYSGSFVQHPELTGLDCIRPCFWVELIRGRPKERTIWTSGSSISFCGVNSDTVAWSWPDGAELPFTIDK.

The Intravirion segment spans residues 1–6 (MNPNQK). Residues 7–27 (IITIGSICMVIGIVSLMLQIG) form a helical membrane-spanning segment. The interval 11-33 (GSICMVIGIVSLMLQIGNIISIW) is involved in apical transport and lipid raft association. Residues 28–449 (NIISIWVSHS…GAELPFTIDK (422 aa)) lie on the Virion surface side of the membrane. Residues 36–70 (HSIQTGNQHQAEPISNTNFLTEKAVASVTLAGNSS) are hypervariable stalk region. N-linked (GlcNAc...) asparagine; by host glycosylation occurs at Asn-68. Residues 71 to 449 (LCPISGWAVH…GAELPFTIDK (379 aa)) form a head of neuraminidase region. Disulfide bonds link Cys-72–Cys-397, Cys-104–Cys-109, Cys-164–Cys-211, Cys-213–Cys-218, Cys-259–Cys-272, Cys-261–Cys-270, Cys-298–Cys-315, and Cys-401–Cys-426. Arg-98 provides a ligand contact to substrate. An N-linked (GlcNAc...) asparagine; by host glycan is attached at Asn-126. Residue Asp-131 is the Proton donor/acceptor of the active site. Arg-132 provides a ligand contact to substrate. Asn-215 carries N-linked (GlcNAc...) asparagine; by host glycosylation. Substrate is bound at residue 257-258 (EE). Arg-273 contacts substrate. Ca(2+) is bound by residues Asp-274, Gly-278, and Asp-304. Arg-348 serves as a coordination point for substrate. Residue Tyr-382 is the Nucleophile of the active site.

Belongs to the glycosyl hydrolase 34 family. In terms of assembly, homotetramer. Ca(2+) serves as cofactor. N-glycosylated.

Its subcellular location is the virion membrane. It is found in the host apical cell membrane. The catalysed reaction is Hydrolysis of alpha-(2-&gt;3)-, alpha-(2-&gt;6)-, alpha-(2-&gt;8)- glycosidic linkages of terminal sialic acid residues in oligosaccharides, glycoproteins, glycolipids, colominic acid and synthetic substrates.. Its activity is regulated as follows. Inhibited by the neuraminidase inhibitors zanamivir (Relenza) and oseltamivir (Tamiflu). These drugs interfere with the release of progeny virus from infected cells and are effective against all influenza strains. Resistance to neuraminidase inhibitors is quite rare. Its function is as follows. Catalyzes the removal of terminal sialic acid residues from viral and cellular glycoconjugates. Cleaves off the terminal sialic acids on the glycosylated HA during virus budding to facilitate virus release. Additionally helps virus spread through the circulation by further removing sialic acids from the cell surface. These cleavages prevent self-aggregation and ensure the efficient spread of the progeny virus from cell to cell. Otherwise, infection would be limited to one round of replication. Described as a receptor-destroying enzyme because it cleaves a terminal sialic acid from the cellular receptors. May facilitate viral invasion of the upper airways by cleaving the sialic acid moieties on the mucin of the airway epithelial cells. Likely to plays a role in the budding process through its association with lipid rafts during intracellular transport. May additionally display a raft-association independent effect on budding. Plays a role in the determination of host range restriction on replication and virulence. Sialidase activity in late endosome/lysosome traffic seems to enhance virus replication. This chain is Neuraminidase, found in Aves (Cat).